The sequence spans 562 residues: Pentatricopeptide repeat-containing protein At3g22670, mitochondrial (562 aa).

The N-terminal 31 residues, 1 to 31 (MLTKLRISKLVSYTLPRRIFQRRFLVTNNTA), are a transit peptide targeting the mitochondrion. PPR repeat units lie at residues 165–199 (SGHT…EESK), 202–232 (TLDT…MEKS), 238–268 (DTIA…LFDT), 272–306 (DART…EFTP), 307–341 (DVVT…GCNP), 342–376 (NVVT…GCVP), 377–411 (DAKF…GVRR), 412–446 (DVLV…EGES), 450–484 (NVET…DVSI), and 485–519 (DVST…GMVP).

The protein belongs to the PPR family. P subfamily.

The protein resides in the mitochondrion. In Arabidopsis thaliana (Mouse-ear cress), this protein is Pentatricopeptide repeat-containing protein At3g22670, mitochondrial.